A 439-amino-acid polypeptide reads, in one-letter code: Methylenetetrahydrofolate--tRNA-(uracil-5-)-methyltransferase TrmFO (439 aa).

8–13 (GGGLAG) is a binding site for FAD.

It belongs to the MnmG family. TrmFO subfamily. FAD is required as a cofactor.

It localises to the cytoplasm. It catalyses the reaction uridine(54) in tRNA + (6R)-5,10-methylene-5,6,7,8-tetrahydrofolate + NADH + H(+) = 5-methyluridine(54) in tRNA + (6S)-5,6,7,8-tetrahydrofolate + NAD(+). The enzyme catalyses uridine(54) in tRNA + (6R)-5,10-methylene-5,6,7,8-tetrahydrofolate + NADPH + H(+) = 5-methyluridine(54) in tRNA + (6S)-5,6,7,8-tetrahydrofolate + NADP(+). Functionally, catalyzes the folate-dependent formation of 5-methyl-uridine at position 54 (M-5-U54) in all tRNAs. The protein is Methylenetetrahydrofolate--tRNA-(uracil-5-)-methyltransferase TrmFO of Dictyoglomus thermophilum (strain ATCC 35947 / DSM 3960 / H-6-12).